Consider the following 275-residue polypeptide: Putative phosphoenolpyruvate synthase regulatory protein (275 aa).

153 to 160 (GVSRSGKT) is a binding site for ADP.

This sequence belongs to the pyruvate, phosphate/water dikinase regulatory protein family. PSRP subfamily.

It carries out the reaction [pyruvate, water dikinase] + ADP = [pyruvate, water dikinase]-phosphate + AMP + H(+). The catalysed reaction is [pyruvate, water dikinase]-phosphate + phosphate + H(+) = [pyruvate, water dikinase] + diphosphate. In terms of biological role, bifunctional serine/threonine kinase and phosphorylase involved in the regulation of the phosphoenolpyruvate synthase (PEPS) by catalyzing its phosphorylation/dephosphorylation. The protein is Putative phosphoenolpyruvate synthase regulatory protein of Nitrosomonas eutropha (strain DSM 101675 / C91 / Nm57).